Consider the following 221-residue polypeptide: Phosphatidylethanolamine-binding protein homolog F40A3.3 (221 aa).

This sequence belongs to the phosphatidylethanolamine-binding protein family.

This is Phosphatidylethanolamine-binding protein homolog F40A3.3 from Caenorhabditis elegans.